The following is a 150-amino-acid chain: D-aminoacyl-tRNA deacylase (150 aa).

Positions 138-139 match the Gly-cisPro motif, important for rejection of L-amino acids motif; sequence GP.

It belongs to the DTD family. Homodimer.

It localises to the cytoplasm. The enzyme catalyses glycyl-tRNA(Ala) + H2O = tRNA(Ala) + glycine + H(+). It carries out the reaction a D-aminoacyl-tRNA + H2O = a tRNA + a D-alpha-amino acid + H(+). An aminoacyl-tRNA editing enzyme that deacylates mischarged D-aminoacyl-tRNAs. Also deacylates mischarged glycyl-tRNA(Ala), protecting cells against glycine mischarging by AlaRS. Acts via tRNA-based rather than protein-based catalysis; rejects L-amino acids rather than detecting D-amino acids in the active site. By recycling D-aminoacyl-tRNA to D-amino acids and free tRNA molecules, this enzyme counteracts the toxicity associated with the formation of D-aminoacyl-tRNA entities in vivo and helps enforce protein L-homochirality. The protein is D-aminoacyl-tRNA deacylase of Chromobacterium violaceum (strain ATCC 12472 / DSM 30191 / JCM 1249 / CCUG 213 / NBRC 12614 / NCIMB 9131 / NCTC 9757 / MK).